Consider the following 370-residue polypeptide: ADSPGLARPHAHFASAGADAAGGGSPVLLLRTTSCCLEDLRPELLEEVKDILIPEERLITHRSRVIGRGHFGSVYHGTYMDPLLGNLHCAVKSLHRITYLEEVEEFLREGILMKGFHHPQVLSLLGVCLPRHGLPLVVLPYMRHGDLRHFVRAQERSPTVKELIGFGLQVALGMEYLAQKKFVHRDLAARNCMLDETLTVKVADFGLARDVFGKEYYSIRQHRHAKLPVRWMALESLQTQKFTTKSDVWSFGVLMWELLTRGASPYPEVDPYDMARYLLRGRRLPQPQPCPDTLYGVMLSCWAPTPEERPSFSGLVCELERVLASLEGEHYINMAVTYVNLESGPPFPPAPRGQLPDSEDEEDEEEEVAE.

In terms of domain architecture, Protein kinase spans 60-323 (THRSRVIGRG…GLVCELERVL (264 aa)). Residues 66-74 (IGRGHFGSV) and Lys92 each bind ATP. The active-site Proton acceptor is Asp186. The residue at position 216 (Tyr216) is a Phosphotyrosine; by autocatalysis. The interval 345–370 (PPFPPAPRGQLPDSEDEEDEEEEVAE) is disordered. Acidic residues predominate over residues 357–370 (DSEDEEDEEEEVAE).

This sequence belongs to the protein kinase superfamily. Tyr protein kinase family.

The catalysed reaction is L-tyrosyl-[protein] + ATP = O-phospho-L-tyrosyl-[protein] + ADP + H(+). This chain is Tyrosine-protein kinase transforming protein SEA (V-SEA), found in Galliformes.